We begin with the raw amino-acid sequence, 233 residues long: Small ribosomal subunit protein uS3 (233 aa).

In terms of domain architecture, KH type-2 spans 39-107 (VRQFLTKELS…PAQINTYEIR (69 aa)).

Belongs to the universal ribosomal protein uS3 family. As to quaternary structure, part of the 30S ribosomal subunit. Forms a tight complex with proteins S10 and S14.

Its function is as follows. Binds the lower part of the 30S subunit head. Binds mRNA in the 70S ribosome, positioning it for translation. In Hamiltonella defensa subsp. Acyrthosiphon pisum (strain 5AT), this protein is Small ribosomal subunit protein uS3.